Consider the following 507-residue polypeptide: Glycine, alanine and asparagine-rich protein (507 aa).

An N-terminal signal peptide occupies residues 1–17 (MLRVPLLVLCLALSVGA). The stretch at 158-185 (SAQALASATAELQAAQDAYDQASAYAEA) forms a coiled coil. Residues 462–498 (GNGNGGNGRNGNGGNGRNGNGGNGGNGNGRNGRGGRY) show a composition bias toward gly residues. The interval 462–507 (GNGNGGNGRNGNGGNGRNGNGGNGGNGNGRNGRGGRYYYGSSDYYY) is disordered.

Component of the acid-soluble and acid-insoluble organic matrix of calcified shell layers (at protein level).

It is found in the secreted. The sequence is that of Glycine, alanine and asparagine-rich protein from Haliotis asinina (Donkey's ear abalone).